Reading from the N-terminus, the 77-residue chain is DNA-directed RNA polymerase subunit epsilon (77 aa).

It belongs to the RNA polymerase subunit epsilon family. In terms of assembly, RNAP is composed of a core of 2 alpha, a beta and a beta' subunit. The core is associated with a delta subunit, and at least one of epsilon or omega. When a sigma factor is associated with the core the holoenzyme is formed, which can initiate transcription.

It catalyses the reaction RNA(n) + a ribonucleoside 5'-triphosphate = RNA(n+1) + diphosphate. Its function is as follows. A non-essential component of RNA polymerase (RNAP). The chain is DNA-directed RNA polymerase subunit epsilon from Streptococcus pneumoniae (strain P1031).